The chain runs to 353 residues: Photosystem II protein D1 (353 aa).

An N-acetylthreonine modification is found at Thr-2. Thr-2 is modified (phosphothreonine). 3 helical membrane passes run 29 to 46, 118 to 133, and 142 to 156; these read YIGW…TATS, HFLL…EWEL, and WIAV…AATA. His-118 is a chlorophyll a binding site. A pheophytin a-binding site is contributed by Tyr-126. 2 residues coordinate [CaMn4O5] cluster: Asp-170 and Glu-189. The helical transmembrane segment at 197-218 threads the bilayer; it reads FHMLGVAGVFGGSLFSAMHGSL. Residue His-198 participates in chlorophyll a binding. Residues His-215 and 264–265 each bind a quinone; that span reads SF. His-215 is a Fe cation binding site. Residue His-272 participates in Fe cation binding. The helical transmembrane segment at 274-288 threads the bilayer; the sequence is LLAAWPVVGIWFTAL. [CaMn4O5] cluster is bound by residues His-332, Glu-333, Asp-342, and Ala-344. Positions 345–353 are excised as a propeptide; that stretch reads AVEAPSTNG.

The protein belongs to the reaction center PufL/M/PsbA/D family. As to quaternary structure, PSII is composed of 1 copy each of membrane proteins PsbA, PsbB, PsbC, PsbD, PsbE, PsbF, PsbH, PsbI, PsbJ, PsbK, PsbL, PsbM, PsbT, PsbX, PsbY, PsbZ, Psb30/Ycf12, at least 3 peripheral proteins of the oxygen-evolving complex and a large number of cofactors. It forms dimeric complexes. The D1/D2 heterodimer binds P680, chlorophylls that are the primary electron donor of PSII, and subsequent electron acceptors. It shares a non-heme iron and each subunit binds pheophytin, quinone, additional chlorophylls, carotenoids and lipids. D1 provides most of the ligands for the Mn4-Ca-O5 cluster of the oxygen-evolving complex (OEC). There is also a Cl(-1) ion associated with D1 and D2, which is required for oxygen evolution. The PSII complex binds additional chlorophylls, carotenoids and specific lipids. serves as cofactor. Post-translationally, tyr-161 forms a radical intermediate that is referred to as redox-active TyrZ, YZ or Y-Z. C-terminally processed by CTPA; processing is essential to allow assembly of the oxygen-evolving complex and thus photosynthetic growth.

It is found in the plastid. Its subcellular location is the chloroplast thylakoid membrane. It catalyses the reaction 2 a plastoquinone + 4 hnu + 2 H2O = 2 a plastoquinol + O2. Functionally, photosystem II (PSII) is a light-driven water:plastoquinone oxidoreductase that uses light energy to abstract electrons from H(2)O, generating O(2) and a proton gradient subsequently used for ATP formation. It consists of a core antenna complex that captures photons, and an electron transfer chain that converts photonic excitation into a charge separation. The D1/D2 (PsbA/PsbD) reaction center heterodimer binds P680, the primary electron donor of PSII as well as several subsequent electron acceptors. This chain is Photosystem II protein D1, found in Dioscorea elephantipes (Elephant's foot yam).